Consider the following 439-residue polypeptide: Vitellogenin-1 (439 aa).

An N-terminal signal peptide occupies residues Met-1–Lys-20. Residues Gln-158–Ser-175 show a composition bias toward polar residues. Disordered stretches follow at residues Gln-158 to Asn-196 and Lys-407 to Gln-439. Tyr-171 bears the Phosphotyrosine mark. Phosphoserine occurs at positions 175, 185, and 186. Tyr-190 bears the Phosphotyrosine mark. The residue at position 191 (Ser-191) is a Phosphoserine. Residues Ala-416–Gln-433 are compositionally biased toward polar residues. Ser-435 is subject to Phosphoserine.

The protein belongs to the AB hydrolase superfamily. Lipase family. In terms of processing, tyrosine sulfation occurs in the female only and plays an essential functional role. As to expression, expressed in females only.

Its subcellular location is the secreted. The protein resides in the vesicle. Functionally, vitellogenin is the major yolk protein of eggs where it is used as a food source during embryogenesis. Along with Yp2 and Yp3, and their receptor yl/yolkless, required for maintenance of microtubule plus-end orientation towards the posterior pole of oocytes. Involved in polarized localization of germ plasm components, such as osk mRNA and vas protein, to the oocyte posterior cortex. Receptor-mediated endocytosis by yl/yolkless is crucial for actin reorganization, mediated by osk isoform A/Long, required to anchor germ plasm components to the oocyte cortex. The protein is Vitellogenin-1 (Yp1) of Drosophila melanogaster (Fruit fly).